A 194-amino-acid chain; its full sequence is Probable nicotinate-nucleotide adenylyltransferase (194 aa).

It belongs to the NadD family.

It carries out the reaction nicotinate beta-D-ribonucleotide + ATP + H(+) = deamido-NAD(+) + diphosphate. It functions in the pathway cofactor biosynthesis; NAD(+) biosynthesis; deamido-NAD(+) from nicotinate D-ribonucleotide: step 1/1. Catalyzes the reversible adenylation of nicotinate mononucleotide (NaMN) to nicotinic acid adenine dinucleotide (NaAD). This chain is Probable nicotinate-nucleotide adenylyltransferase, found in Brucella suis biovar 1 (strain 1330).